The following is a 573-amino-acid chain: Diflavin flavoprotein A 1 (573 aa).

The interval Gln-43–His-236 is zinc metallo-hydrolase. Residues His-92, Glu-94, Asp-96, His-159, Asp-178, and His-236 each contribute to the Fe cation site. Positions Val-265 to Gly-401 constitute a Flavodoxin-like domain. The flavodoxin-reductase-like stretch occupies residues Ile-424–Tyr-573.

In the N-terminal section; belongs to the zinc metallo-hydrolase group 3 family. This sequence in the C-terminal section; belongs to the flavodoxin reductase family. As to quaternary structure, homodimer. It depends on Fe cation as a cofactor. FAD serves as cofactor. Requires FMN as cofactor.

Its function is as follows. Mediates electron transfer from NADH to oxygen, reducing it to water. This modular protein has 3 redox cofactors, in other organisms the same activity requires 2 or 3 proteins. This chain is Diflavin flavoprotein A 1 (dfa1), found in Synechocystis sp. (strain ATCC 27184 / PCC 6803 / Kazusa).